The chain runs to 336 residues: tRNA N6-adenosine threonylcarbamoyltransferase (336 aa).

Positions 114 and 118 each coordinate Fe cation. Substrate is bound by residues 136 to 140 (LVSGG), Asp169, Gly182, Asp186, and Asn275. A Fe cation-binding site is contributed by Asp301.

The protein belongs to the KAE1 / TsaD family. It depends on Fe(2+) as a cofactor.

The protein localises to the cytoplasm. It carries out the reaction L-threonylcarbamoyladenylate + adenosine(37) in tRNA = N(6)-L-threonylcarbamoyladenosine(37) in tRNA + AMP + H(+). Its function is as follows. Required for the formation of a threonylcarbamoyl group on adenosine at position 37 (t(6)A37) in tRNAs that read codons beginning with adenine. Is involved in the transfer of the threonylcarbamoyl moiety of threonylcarbamoyl-AMP (TC-AMP) to the N6 group of A37, together with TsaE and TsaB. TsaD likely plays a direct catalytic role in this reaction. This Streptococcus mutans serotype c (strain ATCC 700610 / UA159) protein is tRNA N6-adenosine threonylcarbamoyltransferase.